The following is a 345-amino-acid chain: Biotin synthase (345 aa).

The Radical SAM core domain occupies 38–256; the sequence is RQVQVSTLLS…IAVARIMMPS (219 aa). Residues C53, C57, and C60 each coordinate [4Fe-4S] cluster. [2Fe-2S] cluster contacts are provided by C97, C128, C188, and R260.

The protein belongs to the radical SAM superfamily. Biotin synthase family. As to quaternary structure, homodimer. [4Fe-4S] cluster is required as a cofactor. It depends on [2Fe-2S] cluster as a cofactor.

It carries out the reaction (4R,5S)-dethiobiotin + (sulfur carrier)-SH + 2 reduced [2Fe-2S]-[ferredoxin] + 2 S-adenosyl-L-methionine = (sulfur carrier)-H + biotin + 2 5'-deoxyadenosine + 2 L-methionine + 2 oxidized [2Fe-2S]-[ferredoxin]. It functions in the pathway cofactor biosynthesis; biotin biosynthesis; biotin from 7,8-diaminononanoate: step 2/2. Functionally, catalyzes the conversion of dethiobiotin (DTB) to biotin by the insertion of a sulfur atom into dethiobiotin via a radical-based mechanism. The protein is Biotin synthase of Yersinia pseudotuberculosis serotype O:1b (strain IP 31758).